Here is a 104-residue protein sequence, read N- to C-terminus: UPF0045 protein YqgV (104 aa).

Belongs to the UPF0045 family.

This is UPF0045 protein YqgV (yqgV) from Bacillus subtilis (strain 168).